The following is a 469-amino-acid chain: ATP-dependent protease ATPase subunit HslU (469 aa).

Residues I24, 66–71, D282, E347, and R419 each bind ATP; that span reads GVGKTE.

Belongs to the ClpX chaperone family. HslU subfamily. In terms of assembly, a double ring-shaped homohexamer of HslV is capped on each side by a ring-shaped HslU homohexamer. The assembly of the HslU/HslV complex is dependent on binding of ATP.

The protein resides in the cytoplasm. In terms of biological role, ATPase subunit of a proteasome-like degradation complex; this subunit has chaperone activity. The binding of ATP and its subsequent hydrolysis by HslU are essential for unfolding of protein substrates subsequently hydrolyzed by HslV. HslU recognizes the N-terminal part of its protein substrates and unfolds these before they are guided to HslV for hydrolysis. This Listeria monocytogenes serotype 4a (strain HCC23) protein is ATP-dependent protease ATPase subunit HslU.